The primary structure comprises 468 residues: 3-isopropylmalate dehydratase large subunit (468 aa).

[4Fe-4S] cluster contacts are provided by cysteine 347, cysteine 407, and cysteine 410.

The protein belongs to the aconitase/IPM isomerase family. LeuC type 1 subfamily. Heterodimer of LeuC and LeuD. Requires [4Fe-4S] cluster as cofactor.

The enzyme catalyses (2R,3S)-3-isopropylmalate = (2S)-2-isopropylmalate. It functions in the pathway amino-acid biosynthesis; L-leucine biosynthesis; L-leucine from 3-methyl-2-oxobutanoate: step 2/4. Its function is as follows. Catalyzes the isomerization between 2-isopropylmalate and 3-isopropylmalate, via the formation of 2-isopropylmaleate. The protein is 3-isopropylmalate dehydratase large subunit of Prochlorococcus marinus (strain AS9601).